The chain runs to 471 residues: NALCN channel auxiliary factor 2 (471 aa).

A helical membrane pass occupies residues 47–67; that stretch reads LASLLFFTVLLADHLWLCAGA. Residues 76 to 115 are disordered; the sequence is SAMRPPWGAGRERQPVPPRAVLPPPPPSPGEPSASSGTCG. Pro residues predominate over residues 90–105; that stretch reads PVPPRAVLPPPPPSPG. An N-linked (GlcNAc...) asparagine glycan is attached at N120. 2 disordered regions span residues 158 to 178 and 399 to 424; these read EPTT…APEF and HYHP…GGSR. Residues 161-171 are compositionally biased toward pro residues; it reads TPAPPLRPPDS. The helical transmembrane segment at 432 to 452 threads the bilayer; that stretch reads LCVLVLILLHTVVSFSSSQSG.

Belongs to the NALF family.

The protein resides in the membrane. Its function is as follows. Probable component of the NALCN channel complex, a channel that regulates the resting membrane potential and controls neuronal excitability. This is NALCN channel auxiliary factor 2 (Nalf2) from Mus musculus (Mouse).